The chain runs to 620 residues: Threonine--tRNA ligase (620 aa).

Residues 1–42 (MFEIAKGISNSLAKKSVGAKVDGKNVDMSYILDHDAEVEFID) form the TGS domain. The catalytic stretch occupies residues 224–515 (DHRKLGKELE…LIEHYAGAFP (292 aa)). Residues Cys315, His366, and His492 each coordinate Zn(2+).

It belongs to the class-II aminoacyl-tRNA synthetase family. Homodimer. Zn(2+) serves as cofactor.

The protein localises to the cytoplasm. It catalyses the reaction tRNA(Thr) + L-threonine + ATP = L-threonyl-tRNA(Thr) + AMP + diphosphate + H(+). In terms of biological role, catalyzes the attachment of threonine to tRNA(Thr) in a two-step reaction: L-threonine is first activated by ATP to form Thr-AMP and then transferred to the acceptor end of tRNA(Thr). Also edits incorrectly charged L-seryl-tRNA(Thr). The sequence is that of Threonine--tRNA ligase from Fusobacterium nucleatum subsp. nucleatum (strain ATCC 25586 / DSM 15643 / BCRC 10681 / CIP 101130 / JCM 8532 / KCTC 2640 / LMG 13131 / VPI 4355).